A 361-amino-acid chain; its full sequence is MKPSLIEKLKTLTYRYSEIGGLLSDSTVINDQDRYRELGKEYAQLEPIVKCFQQFQQNEKAIESAEEMQQEKDPELRKLAEEELEQLTLKKEELEDQLKLLLVPKDPNDERNVFLEIRAGTGGNEAAIFAGDLFRMYARYAETKGWRVNIVSAHEGEHGGFKEVIARVIGEGVYSQLKFESGAHRVQRVPVTESQGRIHTSACTVAIMPEVDEIDQIKINPAELRIDTFRASGAGGQHVNRTDSAIRITHLPTGVVVECQDERSQHKNKARAMSLLQSKLLAAERAKQDQEQAAKRKSLVGSGDRSERIRTYNFPQGRVTDHRINLTLYQLDEVIEGDLDPVIGPLIRELQAEQLAELSGE.

Residue Gln237 is modified to N5-methylglutamine. A disordered region spans residues 286-306; that stretch reads AKQDQEQAAKRKSLVGSGDRS.

It belongs to the prokaryotic/mitochondrial release factor family. Methylated by PrmC. Methylation increases the termination efficiency of RF1.

Its subcellular location is the cytoplasm. In terms of biological role, peptide chain release factor 1 directs the termination of translation in response to the peptide chain termination codons UAG and UAA. The sequence is that of Peptide chain release factor 1 from Coxiella burnetii (strain CbuK_Q154) (Coxiella burnetii (strain Q154)).